The primary structure comprises 557 residues: CCR4-NOT transcription complex subunit 6 (557 aa).

LRR repeat units follow at residues 52 to 73 (HLTA…IAKL), 75 to 96 (NLVY…LGNM), 98 to 120 (SLRE…GKLF), and 121 to 143 (QLQT…YQEP). Residues 153–557 (LLDNLSGTAK…VNGIHLPGRR (405 aa)) form a nuclease domain region. Mg(2+) is bound at residue Glu-240. Substrate contacts are provided by Glu-240, Glu-276, His-361, and Pro-366. Asp-412 lines the Mg(2+) pocket. Asp-412 functions as the Proton donor/acceptor in the catalytic mechanism. Residues Asn-414, Asn-481, and Phe-486 each coordinate substrate.

The protein belongs to the CCR4/nocturin family. As to quaternary structure, component of the CCR4-NOT complex; distinct complexes seem to exist that differ in the participation of probably mutually exclusive catalytic subunits; the complex contains two deadenylase subunits, CNOT6 or CNOT6L, and CNOT7 or CNOT8. Interacts with CNOT7 and CNOT8. Interacts with UNR. Interacts with ZFP36L1 (via N-terminus). Interacts with ZNF335. Mg(2+) is required as a cofactor.

The protein localises to the cytoplasm. Its subcellular location is the nucleus. The catalysed reaction is Exonucleolytic cleavage of poly(A) to 5'-AMP.. Its function is as follows. Poly(A) nuclease with 3'-5' RNase activity. Catalytic component of the CCR4-NOT complex which is one of the major cellular mRNA deadenylases and is linked to various cellular processes including bulk mRNA degradation, miRNA-mediated repression, translational repression during translational initiation and general transcription regulation. Additional complex functions may be a consequence of its influence on mRNA expression. Involved in mRNA decay mediated by the major-protein-coding determinant of instability (mCRD) of the FOS gene in the cytoplasm. In the presence of ZNF335, enhances ligand-dependent transcriptional activity of nuclear hormone receptors, including RARA. The increase of ligand-dependent ESR1-mediated transcription is much smaller, if any. Mediates cell proliferation and cell survival and prevents cellular senescence. The sequence is that of CCR4-NOT transcription complex subunit 6 (CNOT6) from Homo sapiens (Human).